The sequence spans 572 residues: ATP-dependent lipid A-core flippase (572 aa).

5 helical membrane passes run 14–34 (IIPY…VAAL), 55–75 (VFFL…KGVL), 148–168 (IFLL…CFLI), 249–269 (MEII…SEVI), and 272–292 (SATP…YDPV). The 283-residue stretch at 22–304 (FIAMFAMIVV…VSQVNSTIQQ (283 aa)) folds into the ABC transmembrane type-1 domain. Positions 338–571 (IEFHDVSFSY…EGEYQLLYNM (234 aa)) constitute an ABC transporter domain. 370–377 (GPSGGGKT) is a binding site for ATP.

Belongs to the ABC transporter superfamily. Lipid exporter (TC 3.A.1.106) family. In terms of assembly, homodimer.

The protein localises to the cell inner membrane. It carries out the reaction ATP + H2O + lipid A-core oligosaccharideSide 1 = ADP + phosphate + lipid A-core oligosaccharideSide 2.. Its function is as follows. Involved in lipopolysaccharide (LPS) biosynthesis. Translocates lipid A-core from the inner to the outer leaflet of the inner membrane. Transmembrane domains (TMD) form a pore in the inner membrane and the ATP-binding domain (NBD) is responsible for energy generation. The protein is ATP-dependent lipid A-core flippase of Desulfotalea psychrophila (strain LSv54 / DSM 12343).